The sequence spans 229 residues: Potassium/proton antiporter CemA (229 aa).

A run of 3 helical transmembrane segments spans residues 6 to 26 (AFIPFFYFTSIVFLPWLISLC), 107 to 127 (ILHFSTNLISFVILSGYSFWG), and 189 to 209 (ILSGLVSTFPVILDTIFKYWI).

The protein belongs to the CemA family.

The protein resides in the plastid. The protein localises to the chloroplast inner membrane. The enzyme catalyses K(+)(in) + H(+)(out) = K(+)(out) + H(+)(in). Functionally, contributes to K(+)/H(+) antiport activity by supporting proton efflux to control proton extrusion and homeostasis in chloroplasts in a light-dependent manner to modulate photosynthesis. Prevents excessive induction of non-photochemical quenching (NPQ) under continuous-light conditions. Indirectly promotes efficient inorganic carbon uptake into chloroplasts. The sequence is that of Potassium/proton antiporter CemA from Barbarea verna (Land cress).